Reading from the N-terminus, the 119-residue chain is Large ribosomal subunit protein P3 (119 aa).

The disordered stretch occupies residues 81 to 119; sequence GAAAGAASGGAAAEAPKAEEKKEEEKEESEDDLGFSLFD. The segment covering 84 to 95 has biased composition (low complexity); the sequence is AGAASGGAAAEA.

This sequence belongs to the eukaryotic ribosomal protein P1/P2 family. Phosphorylated.

Its function is as follows. Plays an important role in the elongation step of protein synthesis. The sequence is that of Large ribosomal subunit protein P3 from Oryza sativa subsp. japonica (Rice).